A 160-amino-acid polypeptide reads, in one-letter code: Ribosomal RNA large subunit methyltransferase H (160 aa).

The S-adenosyl-L-methionine site is built by Leu76 and Gly108.

This sequence belongs to the RNA methyltransferase RlmH family. In terms of assembly, homodimer.

It localises to the cytoplasm. It catalyses the reaction pseudouridine(1915) in 23S rRNA + S-adenosyl-L-methionine = N(3)-methylpseudouridine(1915) in 23S rRNA + S-adenosyl-L-homocysteine + H(+). Functionally, specifically methylates the pseudouridine at position 1915 (m3Psi1915) in 23S rRNA. The protein is Ribosomal RNA large subunit methyltransferase H of Bradyrhizobium diazoefficiens (strain JCM 10833 / BCRC 13528 / IAM 13628 / NBRC 14792 / USDA 110).